The primary structure comprises 356 residues: Phosphoribosylformylglycinamidine cyclo-ligase (356 aa).

The protein belongs to the AIR synthase family.

It is found in the cytoplasm. The enzyme catalyses 2-formamido-N(1)-(5-O-phospho-beta-D-ribosyl)acetamidine + ATP = 5-amino-1-(5-phospho-beta-D-ribosyl)imidazole + ADP + phosphate + H(+). It participates in purine metabolism; IMP biosynthesis via de novo pathway; 5-amino-1-(5-phospho-D-ribosyl)imidazole from N(2)-formyl-N(1)-(5-phospho-D-ribosyl)glycinamide: step 2/2. This Sinorhizobium fredii (strain NBRC 101917 / NGR234) protein is Phosphoribosylformylglycinamidine cyclo-ligase.